The sequence spans 463 residues: Ribosome biogenesis protein NSA1 (463 aa).

The protein belongs to the NSA1 family. In terms of assembly, component of the pre-66S ribosomal particle. Interacts with NOP7, RRP1 and RRP5.

It is found in the nucleus. Its subcellular location is the nucleolus. Its function is as follows. Involved in the biogenesis of the 60S ribosomal subunit. The protein is Ribosome biogenesis protein NSA1 (NSA1) of Saccharomyces cerevisiae (strain ATCC 204508 / S288c) (Baker's yeast).